The chain runs to 123 residues: Small ribosomal subunit protein uS12 (123 aa).

Residues 1–27 (MPTIQQLIRKPRQPKIKRSKSMHLQEC) form a disordered region. A compositionally biased stretch (basic residues) spans 9–21 (RKPRQPKIKRSKS). Aspartate 89 carries the 3-methylthioaspartic acid modification.

It belongs to the universal ribosomal protein uS12 family. Part of the 30S ribosomal subunit. Contacts proteins S8 and S17. May interact with IF1 in the 30S initiation complex.

Functionally, with S4 and S5 plays an important role in translational accuracy. Its function is as follows. Interacts with and stabilizes bases of the 16S rRNA that are involved in tRNA selection in the A site and with the mRNA backbone. Located at the interface of the 30S and 50S subunits, it traverses the body of the 30S subunit contacting proteins on the other side and probably holding the rRNA structure together. The combined cluster of proteins S8, S12 and S17 appears to hold together the shoulder and platform of the 30S subunit. This Roseobacter denitrificans (strain ATCC 33942 / OCh 114) (Erythrobacter sp. (strain OCh 114)) protein is Small ribosomal subunit protein uS12.